Reading from the N-terminus, the 189-residue chain is Pyridoxal 5'-phosphate synthase subunit PdxT (189 aa).

48–50 contributes to the L-glutamine binding site; the sequence is GES. The active-site Nucleophile is C80. L-glutamine-binding positions include R107 and 136-137; that span reads IR. Residues H172 and E174 each act as charge relay system in the active site.

This sequence belongs to the glutaminase PdxT/SNO family. In the presence of PdxS, forms a dodecamer of heterodimers. Only shows activity in the heterodimer.

The enzyme catalyses aldehydo-D-ribose 5-phosphate + D-glyceraldehyde 3-phosphate + L-glutamine = pyridoxal 5'-phosphate + L-glutamate + phosphate + 3 H2O + H(+). It catalyses the reaction L-glutamine + H2O = L-glutamate + NH4(+). It functions in the pathway cofactor biosynthesis; pyridoxal 5'-phosphate biosynthesis. Functionally, catalyzes the hydrolysis of glutamine to glutamate and ammonia as part of the biosynthesis of pyridoxal 5'-phosphate. The resulting ammonia molecule is channeled to the active site of PdxS. This is Pyridoxal 5'-phosphate synthase subunit PdxT from Ruminiclostridium cellulolyticum (strain ATCC 35319 / DSM 5812 / JCM 6584 / H10) (Clostridium cellulolyticum).